The chain runs to 237 residues: Uridylate kinase (237 aa).

ATP is bound at residue 11-14 (KLSG). Gly53 contacts UMP. ATP contacts are provided by Gly54 and Arg58. Residues Asp73 and 134–141 (TGNPFFTT) contribute to the UMP site. ATP-binding residues include Thr161, Tyr167, and Asp170.

This sequence belongs to the UMP kinase family. In terms of assembly, homohexamer.

Its subcellular location is the cytoplasm. It carries out the reaction UMP + ATP = UDP + ADP. Its pathway is pyrimidine metabolism; CTP biosynthesis via de novo pathway; UDP from UMP (UMPK route): step 1/1. With respect to regulation, inhibited by UTP. In terms of biological role, catalyzes the reversible phosphorylation of UMP to UDP. This chain is Uridylate kinase, found in Burkholderia lata (strain ATCC 17760 / DSM 23089 / LMG 22485 / NCIMB 9086 / R18194 / 383).